Consider the following 365-residue polypeptide: S-type anion channel SLAH4 (365 aa).

Residues 1-25 lie on the Cytoplasmic side of the membrane; sequence MEIPSQEIHIMIDNTISRRKERKTN. The helical transmembrane segment at 26 to 46 threads the bilayer; sequence LADAEPIVLMSVLSSLHAGYF. The Extracellular portion of the chain corresponds to 47-73; it reads RISLSLCSQALLWKIMVHLHSELPSMA. Residues 74–94 traverse the membrane as a helical segment; that stretch reads YYLLWYLALATQVSLCFLYAF. The Cytoplasmic segment spans residues 95–106; sequence KCIFLFDMVKEE. Residues 107-127 form a helical membrane-spanning segment; the sequence is FSHYIGVNYLYAPSISCLLLL. The Extracellular segment spans residues 128–131; sequence QSAP. Residues 132-152 form a helical membrane-spanning segment; that stretch reads MIEPHSVLYQTLFWIFAVPVL. Residues 153-168 are Cytoplasmic-facing; sequence TLDTKLYGQWFTTEKR. Residues 169-189 form a helical membrane-spanning segment; that stretch reads FLSIMANPASQVSVIANLVAA. Over 190–199 the chain is Extracellular; it reads RGAAEMGWKE. The chain crosses the membrane as a helical span at residues 200–220; the sequence is CALCLFSLGMVHYLVIFVTLY. Topologically, residues 221–235 are cytoplasmic; the sequence is QRLPGGNNFPTTLRP. A helical membrane pass occupies residues 236 to 256; the sequence is VFFLFFAAPATASLAWNSICG. A topological domain (extracellular) is located at residue Asn257. A helical transmembrane segment spans residues 258-278; that stretch reads FDTIAKMLFFLSLFIFISLVC. Residues 279–291 lie on the Cytoplasmic side of the membrane; it reads RPNLLKKSIKRFN. The chain crosses the membrane as a helical span at residues 292-312; that stretch reads VAWWAYSFPITFLALNSVQYA. Topologically, residues 313 to 321 are extracellular; it reads QEVKDHVAS. The helical transmembrane segment at 322–342 threads the bilayer; sequence VLMFIFSSMSVLIFISVMLLT. The Cytoplasmic segment spans residues 343–365; the sequence is AANSKRLLRRDHVLWSSTGPKDK.

It belongs to the SLAC1 S-type anion channel family. In terms of assembly, homotrimer.

Its subcellular location is the cell membrane. Slow, weak voltage-dependent S-type anion efflux channel involved in maintenance of anion homeostasis. The polypeptide is S-type anion channel SLAH4 (SLAH4) (Arabidopsis thaliana (Mouse-ear cress)).